The following is a 287-amino-acid chain: Bifunctional protein FolD (287 aa).

NADP(+)-binding positions include 171–173 (GHS), isoleucine 196, and isoleucine 237.

This sequence belongs to the tetrahydrofolate dehydrogenase/cyclohydrolase family. Homodimer.

The catalysed reaction is (6R)-5,10-methylene-5,6,7,8-tetrahydrofolate + NADP(+) = (6R)-5,10-methenyltetrahydrofolate + NADPH. It catalyses the reaction (6R)-5,10-methenyltetrahydrofolate + H2O = (6R)-10-formyltetrahydrofolate + H(+). It participates in one-carbon metabolism; tetrahydrofolate interconversion. Its function is as follows. Catalyzes the oxidation of 5,10-methylenetetrahydrofolate to 5,10-methenyltetrahydrofolate and then the hydrolysis of 5,10-methenyltetrahydrofolate to 10-formyltetrahydrofolate. The protein is Bifunctional protein FolD of Methanosarcina mazei (strain ATCC BAA-159 / DSM 3647 / Goe1 / Go1 / JCM 11833 / OCM 88) (Methanosarcina frisia).